The sequence spans 214 residues: Homeobox protein HEX homolog pha-2 (214 aa).

Disordered stretches follow at residues 1–50 and 180–214; these read MDQK…QKME and RRVR…LSHG. Residues 24–34 are compositionally biased toward low complexity; sequence SSESPIPTGSE. The span at 35-44 shows a compositional bias: polar residues; it reads CSLNESSDTT. A DNA-binding region (homeobox) is located at residues 124 to 183; it reads RKGGQIRFTNEQTDALEHKFDSHKYLSPQERKKLAKSLSLSERQVKTWFQNRRAKWRRVR. A compositionally biased stretch (polar residues) spans 200 to 214; the sequence is SLGQLQSSNPFLSHG.

The protein localises to the nucleus. Transcriptional repressor. Involved in pharyngeal development and required for the formation of the pharyngeal isthmus. Plays a role in modulating cytoskeleton in the muscle cells of the isthmus. Regulates expression of the acetylcholinesterase genes ace-1 and ace-2. May regulate its own expression. In Caenorhabditis elegans, this protein is Homeobox protein HEX homolog pha-2.